Reading from the N-terminus, the 776-residue chain is G protein-regulated inducer of neurite outgrowth 3 (776 aa).

2 disordered regions span residues 1–37 (MGTV…RHRP) and 68–312 (VCEH…IKEV). Residues 101-118 (QLPGSSQPAASAPSSAAG) are compositionally biased toward low complexity. Polar residues-rich tracts occupy residues 129–161 (PANQ…SQRT) and 193–203 (ETIQGTVQTPV). The span at 208-217 (VVSHSSSPVG) shows a compositional bias: low complexity. Residues 242–274 (SGCSENKQPSVTASGPQGTTSVTPQPTPLTSEP) are compositionally biased toward polar residues. A phosphoserine mark is found at serine 332 and serine 365. 2 disordered regions span residues 518 to 637 (ISKA…RPSR) and 723 to 748 (LIKT…LRGR). Residues 520-552 (KADHSGSLDPTNKGDAREKKPASPQVVKEKEST) show a composition bias toward basic and acidic residues. A compositionally biased stretch (polar residues) spans 566–580 (PKSQESGGTESAANP). The segment covering 604-620 (SLSLPSDPMGDSSPGSG) has biased composition (low complexity). The segment covering 725 to 742 (KTQNSQTRRSISSDTSSN) has biased composition (polar residues).

May be involved in neurite outgrowth. This chain is G protein-regulated inducer of neurite outgrowth 3 (GPRIN3), found in Homo sapiens (Human).